The chain runs to 369 residues: Ribosome-interacting GTPase 1 (369 aa).

N-acetylserine is present on S2. An OBG-type G domain is found at 66–292 (ASVGFVGFPS…LLQVMWDRLN (227 aa)). GTP-binding positions include 72–79 (GFPSVGKS), 118–122 (DLPGI), and 250–253 (NKID). The region spanning 292 to 368 (NLVRIYTKPK…EDEDVVTILK (77 aa)) is the TGS domain.

The protein belongs to the TRAFAC class OBG-HflX-like GTPase superfamily. OBG GTPase family. In terms of assembly, associates with translating polyribosomes. Interacts with GIR2, TMA46, YAP1 and YGR250C.

It is found in the cytoplasm. Functionally, involved in ribosomal function. The chain is Ribosome-interacting GTPase 1 (RBG1) from Saccharomyces cerevisiae (strain ATCC 204508 / S288c) (Baker's yeast).